Consider the following 97-residue polypeptide: Small ribosomal subunit protein bS20 (97 aa).

This sequence belongs to the bacterial ribosomal protein bS20 family.

Functionally, binds directly to 16S ribosomal RNA. In Prochlorococcus marinus (strain MIT 9215), this protein is Small ribosomal subunit protein bS20.